Here is a 203-residue protein sequence, read N- to C-terminus: Protein GrpE (203 aa).

The segment covering 1–20 (MSDNGDNNTKSPQHNNPQPN) has biased composition (polar residues). The interval 1 to 46 (MSDNGDNNTKSPQHNNPQPNEKSDGKVQPGQPQVNPQRKFTAGINK) is disordered.

Belongs to the GrpE family. Homodimer.

Its subcellular location is the cytoplasm. In terms of biological role, participates actively in the response to hyperosmotic and heat shock by preventing the aggregation of stress-denatured proteins, in association with DnaK and GrpE. It is the nucleotide exchange factor for DnaK and may function as a thermosensor. Unfolded proteins bind initially to DnaJ; upon interaction with the DnaJ-bound protein, DnaK hydrolyzes its bound ATP, resulting in the formation of a stable complex. GrpE releases ADP from DnaK; ATP binding to DnaK triggers the release of the substrate protein, thus completing the reaction cycle. Several rounds of ATP-dependent interactions between DnaJ, DnaK and GrpE are required for fully efficient folding. The chain is Protein GrpE from Ehrlichia chaffeensis (strain ATCC CRL-10679 / Arkansas).